Consider the following 448-residue polypeptide: UPF0210 protein PAE3581 (448 aa).

The protein belongs to the UPF0210 family.

In Pyrobaculum aerophilum (strain ATCC 51768 / DSM 7523 / JCM 9630 / CIP 104966 / NBRC 100827 / IM2), this protein is UPF0210 protein PAE3581.